Here is a 139-residue protein sequence, read N- to C-terminus: Putative lipoprotein LpqV (139 aa).

The first 25 residues, 1–25 (MRPSRYAPLLCAMVLALAWLSAVAG), serve as a signal peptide directing secretion. A lipid anchor (N-palmitoyl cysteine) is attached at cysteine 26. Cysteine 26 is lipidated: S-diacylglycerol cysteine.

Its subcellular location is the cell membrane. The sequence is that of Putative lipoprotein LpqV (lpqV) from Mycobacterium bovis (strain ATCC BAA-935 / AF2122/97).